Reading from the N-terminus, the 1014-residue chain is Beta-galactosidase (1014 aa).

The active-site Proton donor is Glu460. Glu527 (nucleophile) is an active-site residue.

It belongs to the glycosyl hydrolase 2 family.

The catalysed reaction is Hydrolysis of terminal non-reducing beta-D-galactose residues in beta-D-galactosides.. This Halalkalibacterium halodurans (strain ATCC BAA-125 / DSM 18197 / FERM 7344 / JCM 9153 / C-125) (Bacillus halodurans) protein is Beta-galactosidase (lacZ).